Reading from the N-terminus, the 221-residue chain is uncharacterized protein (221 aa).

This is an uncharacterized protein from Methanocaldococcus jannaschii (strain ATCC 43067 / DSM 2661 / JAL-1 / JCM 10045 / NBRC 100440) (Methanococcus jannaschii).